Reading from the N-terminus, the 908-residue chain is NADH-quinone oxidoreductase subunit G (908 aa).

A 2Fe-2S ferredoxin-type domain is found at 2–83; the sequence is ATIHVDGKEY…GTFISIDDEE (82 aa). 4 residues coordinate [2Fe-2S] cluster: Cys-34, Cys-45, Cys-48, and Cys-67. Residues 83-122 enclose the 4Fe-4S His(Cys)3-ligated-type domain; the sequence is EAKQFRESVVEWLMTNHPHDCPVCEEGGNCHLQDMTVMTG. Positions 99, 103, 106, 112, 151, 154, 157, 201, 228, 231, 235, and 263 each coordinate [4Fe-4S] cluster. In terms of domain architecture, 4Fe-4S Mo/W bis-MGD-type spans 221 to 277; the sequence is MQFAPSICQQCSIGCNISPGERYGELRRIENRYNGTVNHYFLCDRGRFGYGYVNLKD.

Belongs to the complex I 75 kDa subunit family. In terms of assembly, composed of 13 different subunits. Subunits NuoCD, E, F, and G constitute the peripheral sector of the complex. It depends on [2Fe-2S] cluster as a cofactor. Requires [4Fe-4S] cluster as cofactor.

The enzyme catalyses a quinone + NADH + 5 H(+)(in) = a quinol + NAD(+) + 4 H(+)(out). Its function is as follows. NDH-1 shuttles electrons from NADH, via FMN and iron-sulfur (Fe-S) centers, to quinones in the respiratory chain. The immediate electron acceptor for the enzyme in this species is believed to be ubiquinone. Couples the redox reaction to proton translocation (for every two electrons transferred, four hydrogen ions are translocated across the cytoplasmic membrane), and thus conserves the redox energy in a proton gradient. This is NADH-quinone oxidoreductase subunit G (nuoG) from Salmonella typhi.